A 360-amino-acid polypeptide reads, in one-letter code: Peptide chain release factor 1 (360 aa).

Gln-237 carries the post-translational modification N5-methylglutamine.

The protein belongs to the prokaryotic/mitochondrial release factor family. Methylated by PrmC. Methylation increases the termination efficiency of RF1.

It is found in the cytoplasm. In terms of biological role, peptide chain release factor 1 directs the termination of translation in response to the peptide chain termination codons UAG and UAA. The polypeptide is Peptide chain release factor 1 (Pseudomonas aeruginosa (strain LESB58)).